The primary structure comprises 100 residues: NAD(P)H-quinone oxidoreductase subunit 4L, chloroplastic (100 aa).

3 helical membrane passes run 1 to 21, 29 to 49, and 63 to 83; these read MLEHALISGAYLFSIGIYGLI, ALMCLELILNAVNVNLVTFSN, and IFVTAIAAAEAAIGLAIALAI.

Belongs to the complex I subunit 4L family. NDH is composed of at least 16 different subunits, 5 of which are encoded in the nucleus.

The protein localises to the plastid. Its subcellular location is the chloroplast thylakoid membrane. The enzyme catalyses a plastoquinone + NADH + (n+1) H(+)(in) = a plastoquinol + NAD(+) + n H(+)(out). It catalyses the reaction a plastoquinone + NADPH + (n+1) H(+)(in) = a plastoquinol + NADP(+) + n H(+)(out). NDH shuttles electrons from NAD(P)H:plastoquinone, via FMN and iron-sulfur (Fe-S) centers, to quinones in the photosynthetic chain and possibly in a chloroplast respiratory chain. The immediate electron acceptor for the enzyme in this species is believed to be plastoquinone. Couples the redox reaction to proton translocation, and thus conserves the redox energy in a proton gradient. In Cycas taitungensis (Prince sago), this protein is NAD(P)H-quinone oxidoreductase subunit 4L, chloroplastic.